The sequence spans 122 residues: Large ribosomal subunit protein uL14 (122 aa).

This sequence belongs to the universal ribosomal protein uL14 family. Part of the 50S ribosomal subunit. Forms a cluster with proteins L3 and L19. In the 70S ribosome, L14 and L19 interact and together make contacts with the 16S rRNA in bridges B5 and B8.

Binds to 23S rRNA. Forms part of two intersubunit bridges in the 70S ribosome. The protein is Large ribosomal subunit protein uL14 of Rubrobacter xylanophilus (strain DSM 9941 / JCM 11954 / NBRC 16129 / PRD-1).